A 237-amino-acid chain; its full sequence is Phosphoribosylaminoimidazole-succinocarboxamide synthase (237 aa).

This sequence belongs to the SAICAR synthetase family.

The enzyme catalyses 5-amino-1-(5-phospho-D-ribosyl)imidazole-4-carboxylate + L-aspartate + ATP = (2S)-2-[5-amino-1-(5-phospho-beta-D-ribosyl)imidazole-4-carboxamido]succinate + ADP + phosphate + 2 H(+). It functions in the pathway purine metabolism; IMP biosynthesis via de novo pathway; 5-amino-1-(5-phospho-D-ribosyl)imidazole-4-carboxamide from 5-amino-1-(5-phospho-D-ribosyl)imidazole-4-carboxylate: step 1/2. The polypeptide is Phosphoribosylaminoimidazole-succinocarboxamide synthase (Listeria monocytogenes serotype 4a (strain HCC23)).